A 277-amino-acid polypeptide reads, in one-letter code: uncharacterized protein (277 aa).

4 consecutive transmembrane segments (helical) span residues 37 to 59 (YLRYAIIPGLVTGVFSFLLLYIW), 63 to 82 (LIFGLMGSVYGLKVLMPKVI), 214 to 236 (MLCGVIVVFVLAITFSFGFKTYI), and 246 to 268 (WITSGIYMTLMCFFFKSFTTYLF).

The protein resides in the cell membrane. This is an uncharacterized protein from Bacillus anthracis.